Reading from the N-terminus, the 311-residue chain is Delta(1)-pyrroline-2-carboxylate reductase 2 (311 aa).

This sequence belongs to the ornithine cyclodeaminase/mu-crystallin family.

The catalysed reaction is L-proline + NAD(+) = 1-pyrroline-2-carboxylate + NADH + H(+). The enzyme catalyses L-proline + NADP(+) = 1-pyrroline-2-carboxylate + NADPH + H(+). Its function is as follows. Catalyzes the reduction of Delta(1)-pyrroline-2-carboxylate (Pyr2C) to L-proline, using preferentially NADPH over NADH as the electron donor. May be involved in a degradation pathway that converts trans-3-hydroxy-L-proline (t3LHyp) to L-proline. The sequence is that of Delta(1)-pyrroline-2-carboxylate reductase 2 from Burkholderia ambifaria (strain ATCC BAA-244 / DSM 16087 / CCUG 44356 / LMG 19182 / AMMD) (Burkholderia cepacia (strain AMMD)).